Consider the following 80-residue polypeptide: Metallothionein-like protein type 2, MT2-28 (80 aa).

It belongs to the metallothionein superfamily. Type 15 family.

Its function is as follows. Metallothioneins have a high content of cysteine residues that bind various heavy metals. The polypeptide is Metallothionein-like protein type 2, MT2-28 (Brassica juncea (Indian mustard)).